A 169-amino-acid chain; its full sequence is uncharacterized protein (169 aa).

3 helical membrane passes run 25 to 45 (ALMGLFEGGFVADLVLWMSYF), 57 to 77 (FFWVTLSLTQIITSIVAFGVF), and 91 to 111 (LFLIERIFTLVIGISAYFLMV).

The protein belongs to the major facilitator superfamily. Allantoate permease family.

It localises to the membrane. This is an uncharacterized protein from Saccharomyces cerevisiae (strain ATCC 204508 / S288c) (Baker's yeast).